The sequence spans 2338 residues: Proto-oncogene tyrosine-protein kinase ROS (2338 aa).

Positions 1–27 are cleaved as a signal peptide; the sequence is MKRIRWLTPKPATFVVLGCVWISVAQG. Topologically, residues 28-1853 are extracellular; sequence TILSSCLTSC…EDGFWITETS (1826 aa). 2 N-linked (GlcNAc...) asparagine glycosylation sites follow: Asn52 and Asn77. Fibronectin type-III domains lie at 110-205 and 206-294; these read LPTA…VPET and APFI…PSPA. Asn333, Asn361, Asn480, Asn623, Asn934, and Asn1010 each carry an N-linked (GlcNAc...) asparagine glycan. One can recognise a Fibronectin type-III 3 domain in the interval 566-666; the sequence is LPGHPQEVSV…EPSVGTTLVP (101 aa). 2 Fibronectin type-III domains span residues 942-1037 and 1038-1145; these read IPDS…SVPS and APEN…TSEI. N-linked (GlcNAc...) asparagine glycosylation occurs at Asn1298. Fibronectin type-III domains are found at residues 1440–1548, 1549–1648, 1650–1743, and 1744–1845; these read VASN…TKSG, VPGA…VNMF, TPEK…TKAG, and VPSK…LVED. N-linked (GlcNAc...) asparagine glycosylation is present at Asn1675. A helical membrane pass occupies residues 1854–1874; the sequence is FILTIIVGIFLVATVPLTFVW. Residues 1875 to 2338 are Cytoplasmic-facing; sequence HRSLKNHKAT…AHSGHGDVSE (464 aa). The Protein kinase domain maps to 1937 to 2210; sequence LSLRLLLGSG…YNIQDQLQLF (274 aa). ATP-binding positions include 1943–1951 and Lys1972; that span reads LGSGAFGEV. The active-site Proton acceptor is Asp2071. Position 2266 is a phosphotyrosine; by autocatalysis (Tyr2266). A disordered region spans residues 2277–2314; the sequence is EDRYEGPLGSKESGLHDLKKDERQPADKDFCQQPQVAY. Residues 2289–2306 are compositionally biased toward basic and acidic residues; it reads SGLHDLKKDERQPADKDF. The residue at position 2325 (Tyr2325) is a Phosphotyrosine; by autocatalysis.

This sequence belongs to the protein kinase superfamily. Tyr protein kinase family. Insulin receptor subfamily. As to quaternary structure, interacts with PTPN11; may activate the PI3 kinase-mTOR signaling pathway. Interacts with VAV3; constitutive interaction mediating VAV3 phosphorylation. Interacts with PTPN6 (via SH2 1 domain); the interaction is direct and promotes ROS1 dephosphorylation. Post-translationally, phosphorylated. Probably autophosphorylates. Phosphorylation at Tyr-2266 is required for the interaction with PTPN6 that mediates ROS1 dephosphorylation. Phosphorylation at Tyr-2266 stimulates the kinase activity and the activation of the ERK1 signaling cascade. Phosphorylation at Tyr-2266 and/or Tyr-2325 recruits PTPN11. In terms of tissue distribution, expressed in heart, lung, kidney and testis.

The protein resides in the cell membrane. It carries out the reaction L-tyrosyl-[protein] + ATP = O-phospho-L-tyrosyl-[protein] + ADP + H(+). Its activity is regulated as follows. Inhibited by dephosphorylation by PTPN6. In terms of biological role, orphan receptor tyrosine kinase (RTK) that plays a role in epithelial cell differentiation and regionalization of the proximal epididymal epithelium. NELL2 is an endogenous ligand for ROS1. Upon endogenous stimulation by NELL2, ROS1 activates the intracellular signaling pathway and triggers epididymal epithelial differentiation and subsequent sperm maturation. May activate several downstream signaling pathways related to cell differentiation, proliferation, growth and survival including the PI3 kinase-mTOR signaling pathway. Mediates the phosphorylation of PTPN11, an activator of this pathway. May also phosphorylate and activate the transcription factor STAT3 to control anchorage-independent cell growth. Mediates the phosphorylation and the activation of VAV3, a guanine nucleotide exchange factor regulating cell morphology. May activate other downstream signaling proteins including AKT1, MAPK1, MAPK3, IRS1 and PLCG2. This Rattus norvegicus (Rat) protein is Proto-oncogene tyrosine-protein kinase ROS (Ros1).